A 1161-amino-acid polypeptide reads, in one-letter code: PAN2-PAN3 deadenylation complex catalytic subunit pan2 (1161 aa).

WD repeat units lie at residues 20 to 59 (GLPT…RYTS), 102 to 145 (AHEE…DKLQ), and 276 to 315 (ANVS…HFNE). The tract at residues 316–452 (MSKEVEFADV…GAKLNGEAED (137 aa)) is linker. One can recognise a USP domain in the interval 453-822 (DPLLKYSNVE…IPCVLAYQAR (370 aa)). The 179-residue stretch at 871-1049 (VALDTEFVDL…VEDARMALRL (179 aa)) folds into the Exonuclease domain. A divalent metal cation is bound by residues aspartate 874, glutamate 876, aspartate 983, and aspartate 1042. Residues 1094 to 1161 (GTAVTMQNNS…GDFFGGSPLK (68 aa)) are disordered. The segment covering 1097–1110 (VTMQNNSGRNTPST) has biased composition (polar residues). The segment covering 1116 to 1129 (AAAAAATTSAPATP) has biased composition (low complexity). Residues 1145-1155 (TFGGPGTGDFF) are compositionally biased toward gly residues.

The protein belongs to the peptidase C19 family. PAN2 subfamily. As to quaternary structure, forms a heterotrimer with an asymmetric homodimer of the regulatory subunit pan3 to form the poly(A)-nuclease (PAN) deadenylation complex. A divalent metal cation serves as cofactor.

It is found in the cytoplasm. The catalysed reaction is Exonucleolytic cleavage of poly(A) to 5'-AMP.. With respect to regulation, positively regulated by the regulatory subunit pan3. Its function is as follows. Catalytic subunit of the poly(A)-nuclease (PAN) deadenylation complex, one of two cytoplasmic mRNA deadenylases involved in mRNA turnover. PAN specifically shortens poly(A) tails of RNA and the activity is stimulated by poly(A)-binding protein pab1. PAN deadenylation is followed by rapid degradation of the shortened mRNA tails by the CCR4-NOT complex. Deadenylated mRNAs are then degraded by two alternative mechanisms, namely exosome-mediated 3'-5' exonucleolytic degradation, or deadenylation-dependent mRNA decaping and subsequent 5'-3' exonucleolytic degradation by xrn1. May also be involved in post-transcriptional maturation of mRNA poly(A) tails. This chain is PAN2-PAN3 deadenylation complex catalytic subunit pan2, found in Aspergillus clavatus (strain ATCC 1007 / CBS 513.65 / DSM 816 / NCTC 3887 / NRRL 1 / QM 1276 / 107).